A 190-amino-acid chain; its full sequence is Small ribosomal subunit protein uS4c (190 aa).

Residues 92–152 (RLDHVVYRAG…KSPSSAQLPP (61 aa)) form the S4 RNA-binding domain.

It belongs to the universal ribosomal protein uS4 family. Part of the 30S ribosomal subunit. Contacts protein S5. The interaction surface between S4 and S5 is involved in control of translational fidelity.

Its subcellular location is the plastid. It is found in the chloroplast. One of the primary rRNA binding proteins, it binds directly to 16S rRNA where it nucleates assembly of the body of the 30S subunit. Functionally, with S5 and S12 plays an important role in translational accuracy. This is Small ribosomal subunit protein uS4c (rps4) from Cyanidioschyzon merolae (strain NIES-3377 / 10D) (Unicellular red alga).